A 436-amino-acid chain; its full sequence is UPF0597 protein YhaM (436 aa).

It belongs to the UPF0597 family.

The sequence is that of UPF0597 protein YhaM from Salmonella paratyphi C (strain RKS4594).